The chain runs to 478 residues: Bifunctional protein HldE (478 aa).

The ribokinase stretch occupies residues 1 to 318 (MKITLPDFTR…ENAIHARPES (318 aa)). ATP is bound at residue 195-198 (NLSE). The active site involves Asp264. The segment at 344–478 (MTNGVFDILH…KTIISGSGKN (135 aa)) is cytidylyltransferase.

It in the N-terminal section; belongs to the carbohydrate kinase PfkB family. In the C-terminal section; belongs to the cytidylyltransferase family. Homodimer.

The catalysed reaction is D-glycero-beta-D-manno-heptose 7-phosphate + ATP = D-glycero-beta-D-manno-heptose 1,7-bisphosphate + ADP + H(+). It carries out the reaction D-glycero-beta-D-manno-heptose 1-phosphate + ATP + H(+) = ADP-D-glycero-beta-D-manno-heptose + diphosphate. It functions in the pathway nucleotide-sugar biosynthesis; ADP-L-glycero-beta-D-manno-heptose biosynthesis; ADP-L-glycero-beta-D-manno-heptose from D-glycero-beta-D-manno-heptose 7-phosphate: step 1/4. The protein operates within nucleotide-sugar biosynthesis; ADP-L-glycero-beta-D-manno-heptose biosynthesis; ADP-L-glycero-beta-D-manno-heptose from D-glycero-beta-D-manno-heptose 7-phosphate: step 3/4. In terms of biological role, catalyzes the phosphorylation of D-glycero-D-manno-heptose 7-phosphate at the C-1 position to selectively form D-glycero-beta-D-manno-heptose-1,7-bisphosphate. Its function is as follows. Catalyzes the ADP transfer from ATP to D-glycero-beta-D-manno-heptose 1-phosphate, yielding ADP-D-glycero-beta-D-manno-heptose. The protein is Bifunctional protein HldE of Erwinia tasmaniensis (strain DSM 17950 / CFBP 7177 / CIP 109463 / NCPPB 4357 / Et1/99).